A 282-amino-acid polypeptide reads, in one-letter code: Cholesterol 25-hydroxylase-like protein 1, member 1 (282 aa).

N-linked (GlcNAc...) asparagine glycosylation is present at N3. A run of 3 helical transmembrane segments spans residues 40 to 60 (FFPVLLAFSSYIIFSVPFAVL), 85 to 107 (MLRTLWTAVYNHLVFVLPAVLIT), and 127 to 147 (FSGGLGALLVFDTQYFLWHMV). Positions 133-265 (ALLVFDTQYF…FSHWDKIFGT (133 aa)) constitute a Fatty acid hydroxylase domain. The Histidine box-1 signature appears at 144–148 (WHMVH). A Histidine box-2 motif is present at residues 159-163 (HAIHH). The Histidine box-3 motif lies at 240-246 (AHDMHHQ).

This sequence belongs to the sterol desaturase family. Fe cation serves as cofactor.

The protein localises to the endoplasmic reticulum membrane. May catalyze the formation of 25-hydroxycholesterol from cholesterol. This chain is Cholesterol 25-hydroxylase-like protein 1, member 1 (ch25hl1.1), found in Danio rerio (Zebrafish).